The following is a 191-amino-acid chain: Elongation factor P 1 (191 aa).

It belongs to the elongation factor P family.

The protein resides in the cytoplasm. The protein operates within protein biosynthesis; polypeptide chain elongation. In terms of biological role, involved in peptide bond synthesis. Stimulates efficient translation and peptide-bond synthesis on native or reconstituted 70S ribosomes in vitro. Probably functions indirectly by altering the affinity of the ribosome for aminoacyl-tRNA, thus increasing their reactivity as acceptors for peptidyl transferase. This chain is Elongation factor P 1, found in Lactobacillus acidophilus (strain ATCC 700396 / NCK56 / N2 / NCFM).